Consider the following 109-residue polypeptide: T cell receptor alpha variable 27 (109 aa).

Positions 1 to 19 are cleaved as a signal peptide; sequence MVLKFSVSILWIQLAWVST. The region spanning 20 to 109 is the Ig-like domain; the sequence is QLLEQSPQFL…GDTGLYLCAG (90 aa). Asn-36 and Asn-42 each carry an N-linked (GlcNAc...) asparagine glycan. Cysteines 41 and 107 form a disulfide.

As to quaternary structure, alpha-beta TR is a heterodimer composed of an alpha and beta chain; disulfide-linked. The alpha-beta TR is associated with the transmembrane signaling CD3 coreceptor proteins to form the TR-CD3 (TcR or TCR). The assembly of alpha-beta TR heterodimers with CD3 occurs in the endoplasmic reticulum where a single alpha-beta TR heterodimer associates with one CD3D-CD3E heterodimer, one CD3G-CD3E heterodimer and one CD247 homodimer forming a stable octameric structure. CD3D-CD3E and CD3G-CD3E heterodimers preferentially associate with TR alpha and TR beta chains, respectively. The association of the CD247 homodimer is the last step of TcR assembly in the endoplasmic reticulum and is required for transport to the cell surface. (Microbial infection) Interacts with Staphylococcus aureus enterotoxin H/entH.

It is found in the cell membrane. Its function is as follows. V region of the variable domain of T cell receptor (TR) alpha chain that participates in the antigen recognition. Alpha-beta T cell receptors are antigen specific receptors which are essential to the immune response and are present on the cell surface of T lymphocytes. Recognize peptide-major histocompatibility (MH) (pMH) complexes that are displayed by antigen presenting cells (APC), a prerequisite for efficient T cell adaptive immunity against pathogens. Binding of alpha-beta TR to pMH complex initiates TR-CD3 clustering on the cell surface and intracellular activation of LCK that phosphorylates the ITAM motifs of CD3G, CD3D, CD3E and CD247 enabling the recruitment of ZAP70. In turn, ZAP70 phosphorylates LAT, which recruits numerous signaling molecules to form the LAT signalosome. The LAT signalosome propagates signal branching to three major signaling pathways, the calcium, the mitogen-activated protein kinase (MAPK) kinase and the nuclear factor NF-kappa-B (NF-kB) pathways, leading to the mobilization of transcription factors that are critical for gene expression and essential for T cell growth and differentiation. The T cell repertoire is generated in the thymus, by V-(D)-J rearrangement. This repertoire is then shaped by intrathymic selection events to generate a peripheral T cell pool of self-MH restricted, non-autoaggressive T cells. Post-thymic interaction of alpha-beta TR with the pMH complexes shapes TR structural and functional avidity. In Homo sapiens (Human), this protein is T cell receptor alpha variable 27.